We begin with the raw amino-acid sequence, 254 residues long: Tyrosine-protein phosphatase YwqE (254 aa).

This sequence belongs to the metallo-dependent hydrolases superfamily. CpsB/CapC family. Mn(2+) serves as cofactor.

The enzyme catalyses O-phospho-L-tyrosyl-[protein] + H2O = L-tyrosyl-[protein] + phosphate. Inhibited by vanadate and sodium pyrophosphate. Not inhibited by sodium fluoride. Functionally, dephosphorylates the phosphotyrosine-containing proteins YwqD, YwqF and Ssb. The protein is Tyrosine-protein phosphatase YwqE (ywqE) of Bacillus subtilis (strain 168).